A 555-amino-acid chain; its full sequence is NAD-dependent protein deacetylase sirtuin-1 (555 aa).

A Nuclear localization signal motif is present at residues P39–K46. Residues K44–E304 form the Deacetylase sirtuin-type domain. K46 carries the N6-acetyllysine modification. The segment at I64–L67 is required for interaction with the sumoylated form of CCAR2. Residues G69–Y88 and Q153–D156 each bind NAD(+). H171 acts as the Proton acceptor in catalysis. Zn(2+)-binding residues include C179 and C182. K185 is subject to N6-acetyllysine. The Zn(2+) site is built by C203 and C206. C203 and C206 each carry S-nitrosocysteine. K238 carries the N6-acetyllysine modification. The Nuclear export signal signature appears at V241–I247. Residues G248–S250, N273–E275, and C290 each bind NAD(+). K321 bears the N6-acetyllysine mark. The segment at L335–P354 is disordered. T338 is modified (phosphothreonine). Residue S343 is modified to Phosphoserine. Polar residues predominate over residues D345 to P354. The residue at position 352 (T352) is a Phosphothreonine. At K417 the chain carries N6-acetyllysine. 2 positions are modified to phosphoserine: S466 and S468. The interval E469–Q529 is disordered. Over residues L473–E493 the composition is skewed to low complexity. Positions E494–D514 are enriched in acidic residues. A Phosphoserine modification is found at S552.

Belongs to the sirtuin family. Class I subfamily. In terms of assembly, interacts with XBP1 isoform 2. Found in a complex with PCAF and MYOD1. Interacts with FOXO1; the interaction deacetylates FOXO1, resulting in its nuclear retention and promotion of its transcriptional activity Component of the eNoSC complex, composed of SIRT1, SUV39H1 and RRP8. Interacts with HES1, HEY2 and PML. Interacts with RPS19BP1/AROS. Interacts with CCAR2 (via N-terminus); the interaction disrupts the interaction between SIRT1 and p53/TP53. Interacts with SETD7; the interaction induces the dissociation of SIRT1 from p53/TP53 and increases p53/TP53 activity. Interacts with MYCN, NR1I2, CREBZF, TSC2, TLE1, FOS, JUN, NR0B2, PPARG, NCOR, IRS1, IRS2 and NMNAT1. Interacts with HNF1A; the interaction occurs under nutrient restriction. Interacts with SUZ12; the interaction mediates the association with the PRC4 histone methylation complex which is specific as an association with PCR2 and PCR3 complex variants is not found. Interacts with HIV-1 tat. Interacts with BCL6; leads to a epigenetic repression of specific target genes. Interacts with CLOCK, BMAL1 and PER2. Interacts with PPARA; the interaction seems to be modulated by NAD(+) levels. Interacts with NR1H3 and this interaction is inhibited in the presence of CCAR2. Interacts with CHEK2. Interacts with p53/TP53. Exhibits a preferential interaction with sumoylated CCAR2 over its unmodified form. Interacts with PACS2. Interacts with SIRT7. Interacts with PUS7. Interacts with TULP3. Interacts with MORN3; the interaction enhances the ubiquitination of p53/TP53. The cofactor is Zn(2+). In terms of processing, methylated on multiple lysine residues; methylation is enhanced after DNA damage and is dispensable for deacetylase activity toward p53/TP53. Post-translationally, phosphorylated. Phosphorylated by STK4/MST1, resulting in inhibition of SIRT1-mediated p53/TP53 deacetylation. Phosphorylation by MAPK8/JNK1 at Thr-338 leads to increased nuclear localization and enzymatic activity. Phosphorylation at Thr-338 by DYRK1A and DYRK3 activates deacetylase activity and promotes cell survival. Phosphorylated by CaMK2, leading to increased p53/TP53 and NF-kappa-B p65/RELA deacetylation activity. S-nitrosylated by GAPDH, leading to inhibit the NAD-dependent protein deacetylase activity. In terms of processing, acetylated at various Lys residues. Deacetylated via an autocatalytic mechanism. Autodeacetylation at Lys-46 promotes its protein deacetylase activity. Post-translationally, ubiquitinated; leading to degradation. Deubiquitinated by USP22; leading to stabilization.

Its subcellular location is the nucleus. The protein localises to the PML body. The protein resides in the cytoplasm. The catalysed reaction is N(6)-acetyl-L-lysyl-[protein] + NAD(+) + H2O = 2''-O-acetyl-ADP-D-ribose + nicotinamide + L-lysyl-[protein]. It carries out the reaction N(6)-propanoyl-L-lysyl-[protein] + NAD(+) + H2O = 3''-O-propanoyl-ADP-D-ribose + nicotinamide + L-lysyl-[protein]. The enzyme catalyses N(6)-(2E)-butenoyl-L-lysyl-[protein] + NAD(+) + H2O = 2''-O-(2E)-but-2-enoyl-ADP-D-ribose + nicotinamide + L-lysyl-[protein]. Its activity is regulated as follows. Inhibited by nicotinamide. Activated by resveratrol (3,5,4'-trihydroxy-trans-stilbene), butein (3,4,2',4'-tetrahydroxychalcone), piceatannol (3,5,3',4'-tetrahydroxy-trans-stilbene), Isoliquiritigenin (4,2',4'-trihydroxychalcone), fisetin (3,7,3',4'-tetrahydroxyflavone) and quercetin (3,5,7,3',4'-pentahydroxyflavone). MAPK8/JNK1 and RPS19BP1/AROS act as positive regulators of deacetylation activity. Negatively regulated by CCAR2. Functionally, NAD-dependent protein deacetylase that links transcriptional regulation directly to intracellular energetics and participates in the coordination of several separated cellular functions such as cell cycle, response to DNA damage, metabolism, apoptosis and autophagy. Can modulate chromatin function through deacetylation of histones and can promote alterations in the methylation of histones and DNA, leading to transcriptional repression. Deacetylates a broad range of transcription factors and coregulators, thereby regulating target gene expression positively and negatively. Serves as a sensor of the cytosolic ratio of NAD(+)/NADH which is altered by glucose deprivation and metabolic changes associated with caloric restriction. Is essential in skeletal muscle cell differentiation and in response to low nutrients mediates the inhibitory effect on skeletal myoblast differentiation which also involves 5'-AMP-activated protein kinase (AMPK) and nicotinamide phosphoribosyltransferase (NAMPT). Component of the eNoSC (energy-dependent nucleolar silencing) complex, a complex that mediates silencing of rDNA in response to intracellular energy status and acts by recruiting histone-modifying enzymes. The eNoSC complex is able to sense the energy status of cell: upon glucose starvation, elevation of NAD(+)/NADP(+) ratio activates SIRT1, leading to histone H3 deacetylation followed by dimethylation of H3 at 'Lys-9' (H3K9me2) by SUV39H1 and the formation of silent chromatin in the rDNA locus. Deacetylates 'Lys-266' of SUV39H1, leading to its activation. Inhibits skeletal muscle differentiation by deacetylating PCAF and MYOD1. Deacetylates H2A and 'Lys-26' of H1-4. Deacetylates 'Lys-16' of histone H4 (in vitro). Involved in NR0B2/SHP corepression function through chromatin remodeling: Recruited to LRH1 target gene promoters by NR0B2/SHP thereby stimulating histone H3 and H4 deacetylation leading to transcriptional repression. Proposed to contribute to genomic integrity via positive regulation of telomere length; however, reports on localization to pericentromeric heterochromatin are conflicting. Proposed to play a role in constitutive heterochromatin (CH) formation and/or maintenance through regulation of the available pool of nuclear SUV39H1. Upon oxidative/metabolic stress decreases SUV39H1 degradation by inhibiting SUV39H1 polyubiquitination by MDM2. This increase in SUV39H1 levels enhances SUV39H1 turnover in CH, which in turn seems to accelerate renewal of the heterochromatin which correlates with greater genomic integrity during stress response. Deacetylates 'Lys-382' of p53/TP53 and impairs its ability to induce transcription-dependent proapoptotic program and modulate cell senescence. Deacetylates TAF1B and thereby represses rDNA transcription by the RNA polymerase I. Deacetylates MYC, promotes the association of MYC with MAX and decreases MYC stability leading to compromised transformational capability. Deacetylates FOXO3 in response to oxidative stress thereby increasing its ability to induce cell cycle arrest and resistance to oxidative stress but inhibiting FOXO3-mediated induction of apoptosis transcriptional activity; also leading to FOXO3 ubiquitination and protesomal degradation. Appears to have a similar effect on MLLT7/FOXO4 in regulation of transcriptional activity and apoptosis. Deacetylates DNMT1; thereby impairs DNMT1 methyltransferase-independent transcription repressor activity, modulates DNMT1 cell cycle regulatory function and DNMT1-mediated gene silencing. Deacetylates RELA/NF-kappa-B p65 thereby inhibiting its transactivating potential and augments apoptosis in response to TNF-alpha. Deacetylates HIF1A, KAT5/TIP60, RB1 and HIC1. Deacetylates FOXO1 resulting in its nuclear retention and enhancement of its transcriptional activity leading to increased gluconeogenesis in liver. Inhibits E2F1 transcriptional activity and apoptotic function, possibly by deacetylation. Involved in HES1- and HEY2-mediated transcriptional repression. In cooperation with MYCN seems to be involved in transcriptional repression of DUSP6/MAPK3 leading to MYCN stabilization by phosphorylation at 'Ser-62'. Deacetylates MEF2D. Required for antagonist-mediated transcription suppression of AR-dependent genes which may be linked to local deacetylation of histone H3. Represses HNF1A-mediated transcription. Required for the repression of ESRRG by CREBZF. Deacetylates NR1H3 AND NR1H2 and deacetylation of NR1H3 at 'Lys-434' positively regulates transcription of NR1H3:RXR target genes, promotes NR1H3 proteasomal degradation and results in cholesterol efflux; a promoter clearing mechanism after reach round of transcription is proposed. Involved in lipid metabolism: deacetylates LPIN1, thereby inhibiting diacylglycerol synthesis. Implicated in regulation of adipogenesis and fat mobilization in white adipocytes by repression of PPARG which probably involves association with NCOR1 and SMRT/NCOR2. Deacetylates p300/EP300 and PRMT1. Deacetylates ACSS2 leading to its activation, and HMGCS1 deacetylation. Involved in liver and muscle metabolism. Through deacetylation and activation of PPARGC1A is required to activate fatty acid oxidation in skeletal muscle under low-glucose conditions and is involved in glucose homeostasis. Involved in regulation of PPARA and fatty acid beta-oxidation in liver. Involved in positive regulation of insulin secretion in pancreatic beta cells in response to glucose; the function seems to imply transcriptional repression of UCP2. Proposed to deacetylate IRS2 thereby facilitating its insulin-induced tyrosine phosphorylation. Deacetylates SREBF1 isoform SREBP-1C thereby decreasing its stability and transactivation in lipogenic gene expression. Involved in DNA damage response by repressing genes which are involved in DNA repair, such as XPC and TP73, deacetylating XRCC6/Ku70, and facilitating recruitment of additional factors to sites of damaged DNA, such as SIRT1-deacetylated NBN can recruit ATM to initiate DNA repair and SIRT1-deacetylated XPA interacts with RPA2. Also involved in DNA repair of DNA double-strand breaks by homologous recombination and specifically single-strand annealing independently of XRCC6/Ku70 and NBN. Promotes DNA double-strand breaks by mediating deacetylation of SIRT6. Transcriptional suppression of XPC probably involves an E2F4:RBL2 suppressor complex and protein kinase B (AKT) signaling. Transcriptional suppression of TP73 probably involves E2F4 and PCAF. Deacetylates WRN thereby regulating its helicase and exonuclease activities and regulates WRN nuclear translocation in response to DNA damage. Deacetylates APEX1 at 'Lys-6' and 'Lys-7' and stimulates cellular AP endonuclease activity by promoting the association of APEX1 to XRCC1. Catalyzes deacetylation of ERCC4/XPF, thereby impairing interaction with ERCC1 and nucleotide excision repair (NER). Increases p53/TP53-mediated transcription-independent apoptosis by blocking nuclear translocation of cytoplasmic p53/TP53 and probably redirecting it to mitochondria. Deacetylates XRCC6/Ku70 at 'Lys-539' and 'Lys-542' causing it to sequester BAX away from mitochondria thereby inhibiting stress-induced apoptosis. Is involved in autophagy, presumably by deacetylating ATG5, ATG7 and MAP1LC3B/ATG8. Deacetylates AKT1 which leads to enhanced binding of AKT1 and PDK1 to PIP3 and promotes their activation. Proposed to play role in regulation of STK11/LBK1-dependent AMPK signaling pathways implicated in cellular senescence which seems to involve the regulation of the acetylation status of STK11/LBK1. Can deacetylate STK11/LBK1 and thereby increase its activity, cytoplasmic localization and association with STRAD; however, the relevance of such activity in normal cells is unclear. In endothelial cells is shown to inhibit STK11/LBK1 activity and to promote its degradation. Deacetylates SMAD7 at 'Lys-64' and 'Lys-70' thereby promoting its degradation. Deacetylates CIITA and augments its MHC class II transactivation and contributes to its stability. Deacetylates MECOM/EVI1. Deacetylates PML at 'Lys-487' and this deacetylation promotes PML control of PER2 nuclear localization. During the neurogenic transition, represses selective NOTCH1-target genes through histone deacetylation in a BCL6-dependent manner and leading to neuronal differentiation. Regulates the circadian expression of several core clock genes, including BMAL1, RORC, PER2 and CRY1 and plays a critical role in maintaining a controlled rhythmicity in histone acetylation, thereby contributing to circadian chromatin remodeling. Deacetylates BMAL1 and histones at the circadian gene promoters in order to facilitate repression by inhibitory components of the circadian oscillator. Deacetylates PER2, facilitating its ubiquitination and degradation by the proteasome. Protects cardiomyocytes against palmitate-induced apoptosis. Deacetylates XBP1 isoform 2; deacetylation decreases protein stability of XBP1 isoform 2 and inhibits its transcriptional activity. Deacetylates PCK1 and directs its activity toward phosphoenolpyruvate production promoting gluconeogenesis. Involved in the CCAR2-mediated regulation of PCK1 and NR1D1. Deacetylates CTNB1 at 'Lys-49'. In POMC (pro-opiomelanocortin) neurons, required for leptin-induced activation of PI3K signaling. In addition to protein deacetylase activity, also acts as a protein-lysine deacylase by mediating protein depropionylation and decrotonylation. Mediates depropionylation of Osterix (SP7). Catalyzes decrotonylation of histones; it however does not represent a major histone decrotonylase. Deacetylates SOX9; promoting SOX9 nuclear localization and transactivation activity. Involved in the regulation of centrosome duplication. Deacetylates CENATAC in G1 phase, allowing for SASS6 accumulation on the centrosome and subsequent procentriole assembly. Deacetylates NDC80/HEC1. This chain is NAD-dependent protein deacetylase sirtuin-1, found in Rattus norvegicus (Rat).